A 461-amino-acid chain; its full sequence is Steroidogenic factor 1 (461 aa).

The nuclear receptor DNA-binding region spans 10–85 (DELCPVCGDK…VGMRLEAVRA (76 aa)). An NR C4-type zinc finger spans residues 13–33 (CPVCGDKVSGYHYGLLTCESC). Lys-34, Lys-38, and Lys-72 each carry N6-acetyllysine. The NR C4-type zinc finger occupies 49 to 73 (CTESQSCKIDKTLRKRCPFCRFQKC). Lys-119 is covalently cross-linked (Glycyl lysine isopeptide (Lys-Gly) (interchain with G-Cter in SUMO)). The disordered stretch occupies residues 119 to 153 (KLETGPPMGVPPPPPPPPDYMLPPGLHVPEPKGLA). The span at 126–139 (MGVPPPPPPPPDYM) shows a compositional bias: pro residues. A Glycyl lysine isopeptide (Lys-Gly) (interchain with G-Cter in SUMO) cross-link involves residue Lys-194. Ser-203 is modified (phosphoserine; by CDK7). Residues 222-459 (GVPELILQLL…NLLIEMLQAK (238 aa)) enclose the NR LBD domain. Residues Gly-341, Tyr-436, and Lys-440 each coordinate a 1,2-diacyl-sn-glycero-3-phosphocholine.

Belongs to the nuclear hormone receptor family. NR5 subfamily. As to quaternary structure, binds DNA as a monomer. Part of a complex consisting of SFPQ, NONO and NR5A1. Interacts with NR0B2. Interacts with DGKQ and CDK7. Binds to and activated by HIPK3. Post-translationally, acetylation stimulates the transcriptional activity. Sumoylation reduces CDK7-mediated phosphorylation on Ser-203. In terms of processing, phosphorylated on Ser-203 by CDK7. This phosphorylation promotes transcriptional activity.

It is found in the nucleus. Functionally, transcriptional activator. Seems to be essential for sexual differentiation and formation of the primary steroidogenic tissues. Binds to the Ad4 site found in the promoter region of steroidogenic P450 genes such as CYP11A, CYP11B and CYP21B. Also regulates the AMH/Muellerian inhibiting substance gene as well as the AHCH and STAR genes. 5'-YCAAGGYC-3' and 5'-RRAGGTCA-3' are the consensus sequences for the recognition by NR5A1. The SFPQ-NONO-NR5A1 complex binds to the CYP17 promoter and regulates basal and cAMP-dependent transcriptional activity. Binds phospholipids with a phosphatidylinositol (PI) headgroup, in particular PI(3,4)P2 and PI(3,4,5)P3. Activated by the phosphorylation of NR5A1 by HIPK3 leading to increased steroidogenic gene expression upon cAMP signaling pathway stimulation. The protein is Steroidogenic factor 1 (NR5A1) of Equus caballus (Horse).